We begin with the raw amino-acid sequence, 260 residues long: Carbonic anhydrase 3 (260 aa).

A2 carries the post-translational modification N-acetylalanine. An Alpha-carbonic anhydrase domain is found at 3–259; sequence KEWGYASHNG…IKGRVVRASF (257 aa). Residues S29, S43, S48, S50, and S55 each carry the phosphoserine modification. Positions 64–67 are involved in proton transfer; the sequence is KTCR. T73 carries the post-translational modification Phosphothreonine. Zn(2+) is bound by residues H94, H96, and H119. Position 127 is a phosphotyrosine (Y127). T129 bears the Phosphothreonine mark. S-glutathionyl cysteine is present on residues C182 and C187. Residue 198–199 participates in substrate binding; it reads TT. T216 bears the Phosphothreonine mark. S219 bears the Phosphoserine mark.

This sequence belongs to the alpha-carbonic anhydrase family. Zn(2+) serves as cofactor. S-thiolated both by thiol-disulfide exchange with glutathione disulfide and by oxyradical-initiated S-thiolation with reduced glutathione. In terms of processing, S-glutathionylated in hepatocytes under oxidative stress. In terms of tissue distribution, expressed in liver and muscle.

The protein localises to the cytoplasm. It catalyses the reaction hydrogencarbonate + H(+) = CO2 + H2O. Its activity is regulated as follows. Inhibited by acetazolamide. Reversible hydration of carbon dioxide. This chain is Carbonic anhydrase 3 (Ca3), found in Rattus norvegicus (Rat).